The following is a 1367-amino-acid chain: Protein patched homolog 3 (1367 aa).

At 1–97 the chain is on the cytoplasmic side; sequence MSFPDEETDL…WLFRIGCFVQ (97 aa). A helical membrane pass occupies residues 98–118; it reads RWAWSTIFISLFLYCLCLGGL. At 119 to 625 the chain is on the extracellular side; sequence RHVTIETDLV…IADMLEEFSQ (507 aa). N-linked (GlcNAc...) asparagine glycosylation is found at Asn-235, Asn-310, Asn-454, and Asn-591. Residues 626–646 traverse the membrane as a helical segment; the sequence is FNYIIIVIGYILMVIYAAFTQ. Residues 627–788 enclose the SSD domain; sequence NYIIIVIGYI…MFIFPAMIGI (162 aa). Topologically, residues 647-659 are cytoplasmic; sequence GRFQGWWLAVQSN. The helical transmembrane segment at 660 to 680 threads the bilayer; it reads VALAICGVILVTISSICGLGF. The Extracellular portion of the chain corresponds to 681–694; it reads ATHLGINFNAATTQ. The helical transmembrane segment at 695–715 threads the bilayer; it reads VVPFLSLGLGIDDMFLLLHNY. Topologically, residues 716–737 are cytoplasmic; sequence DEIINICNKNEIGVLLKETGMS. The helical transmembrane segment at 738 to 758 threads the bilayer; sequence VMLTSINNILAFISGYVLPIP. Topologically, residues 759-767 are extracellular; sequence ALRSFCSQT. The helical transmembrane segment at 768–788 threads the bilayer; the sequence is AILLAFNLIFLMFIFPAMIGI. At 789–863 the chain is on the cytoplasmic side; sequence DLRRQRKGKR…KIYIPALKNN (75 aa). The helical transmembrane segment at 864-884 threads the bilayer; the sequence is VVKACVLIGTTTAVVFGLYGM. The Extracellular segment spans residues 885–1143; sequence YTSTLGLELA…WEQYLTLRWN (259 aa). A helical transmembrane segment spans residues 1144–1164; the sequence is LFQAICIIALAVFCVISILMF. Topologically, residues 1165–1171 are cytoplasmic; it reads NPWAATL. A helical membrane pass occupies residues 1172–1192; the sequence is IMCIVVITTIELGGFMGLMGI. Over 1193–1199 the chain is Extracellular; sequence KMNPISA. The chain crosses the membrane as a helical span at residues 1200–1220; it reads VTLICAVGIGVEFTAHVELAF. Residues 1221-1237 are Cytoplasmic-facing; that stretch reads LTALGTIDQRLESCLQH. The helical transmembrane segment at 1238–1258 threads the bilayer; sequence MFVPVYHGAISTFLGVVMLVF. At 1259 to 1273 the chain is on the extracellular side; the sequence is SEFDFVVTYFFYTMT. The helical transmembrane segment at 1274–1294 threads the bilayer; the sequence is LLVALGVFNGLCVLPVILTLV. Residues 1295-1367 lie on the Cytoplasmic side of the membrane; it reads GPKPELTPTD…SDDESSPAHK (73 aa). Residues 1302–1367 are disordered; that stretch reads PTDGSSVLPP…SDDESSPAHK (66 aa). The segment covering 1346–1356 has biased composition (low complexity); it reads RDSPSTSSASH.

The protein belongs to the patched family. In males, expressed in the precursor and mature sensory rays, the cloaca, and pre-anal ganglia and cephalic neurons. Also expressed in five cells in the valve region between the seminal vesicle and vas deferens of the somatic gonad.

Its subcellular location is the apical cell membrane. It is found in the cell junction. It localises to the adherens junction. In terms of biological role, regulates osmosis during embryonic development. Required for larval development and in particular is involved in larval molting. In Caenorhabditis elegans, this protein is Protein patched homolog 3.